Reading from the N-terminus, the 257-residue chain is Imidazole glycerol phosphate synthase subunit HisF (257 aa).

Residues D12 and D131 contribute to the active site.

The protein belongs to the HisA/HisF family. As to quaternary structure, heterodimer of HisH and HisF.

The protein resides in the cytoplasm. The catalysed reaction is 5-[(5-phospho-1-deoxy-D-ribulos-1-ylimino)methylamino]-1-(5-phospho-beta-D-ribosyl)imidazole-4-carboxamide + L-glutamine = D-erythro-1-(imidazol-4-yl)glycerol 3-phosphate + 5-amino-1-(5-phospho-beta-D-ribosyl)imidazole-4-carboxamide + L-glutamate + H(+). It functions in the pathway amino-acid biosynthesis; L-histidine biosynthesis; L-histidine from 5-phospho-alpha-D-ribose 1-diphosphate: step 5/9. IGPS catalyzes the conversion of PRFAR and glutamine to IGP, AICAR and glutamate. The HisF subunit catalyzes the cyclization activity that produces IGP and AICAR from PRFAR using the ammonia provided by the HisH subunit. In Burkholderia multivorans (strain ATCC 17616 / 249), this protein is Imidazole glycerol phosphate synthase subunit HisF.